Consider the following 185-residue polypeptide: Ribosome maturation factor RimM (185 aa).

The 80-residue stretch at 106–185 (TGDYYWKDLI…TIEVDWDPGF (80 aa)) folds into the PRC barrel domain.

It belongs to the RimM family. In terms of assembly, binds ribosomal protein uS19.

The protein localises to the cytoplasm. Its function is as follows. An accessory protein needed during the final step in the assembly of 30S ribosomal subunit, possibly for assembly of the head region. Essential for efficient processing of 16S rRNA. May be needed both before and after RbfA during the maturation of 16S rRNA. It has affinity for free ribosomal 30S subunits but not for 70S ribosomes. In Photorhabdus laumondii subsp. laumondii (strain DSM 15139 / CIP 105565 / TT01) (Photorhabdus luminescens subsp. laumondii), this protein is Ribosome maturation factor RimM.